Here is a 326-residue protein sequence, read N- to C-terminus: Acetyl-coenzyme A carboxylase carboxyl transferase subunit alpha (326 aa).

Positions 44–298 (KLETRAMQLR…KQALLDNLDE (255 aa)) constitute a CoA carboxyltransferase C-terminal domain.

It belongs to the AccA family. In terms of assembly, acetyl-CoA carboxylase is a heterohexamer composed of biotin carboxyl carrier protein (AccB), biotin carboxylase (AccC) and two subunits each of ACCase subunit alpha (AccA) and ACCase subunit beta (AccD).

The protein localises to the cytoplasm. It catalyses the reaction N(6)-carboxybiotinyl-L-lysyl-[protein] + acetyl-CoA = N(6)-biotinyl-L-lysyl-[protein] + malonyl-CoA. Its pathway is lipid metabolism; malonyl-CoA biosynthesis; malonyl-CoA from acetyl-CoA: step 1/1. In terms of biological role, component of the acetyl coenzyme A carboxylase (ACC) complex. First, biotin carboxylase catalyzes the carboxylation of biotin on its carrier protein (BCCP) and then the CO(2) group is transferred by the carboxyltransferase to acetyl-CoA to form malonyl-CoA. This Trichormus variabilis (strain ATCC 29413 / PCC 7937) (Anabaena variabilis) protein is Acetyl-coenzyme A carboxylase carboxyl transferase subunit alpha.